The chain runs to 159 residues: Aphid transmission protein (159 aa).

It belongs to the caulimoviridae ORF II family.

Its function is as follows. This protein is involved in virus transmission. The sequence is that of Aphid transmission protein from Cauliflower mosaic virus (strain PV147) (CaMV).